Consider the following 426-residue polypeptide: UDP-N-acetylglucosamine 1-carboxyvinyltransferase (426 aa).

24 to 25 (KN) contacts phosphoenolpyruvate. Residue Arg95 coordinates UDP-N-acetyl-alpha-D-glucosamine. Cys119 acts as the Proton donor in catalysis. The residue at position 119 (Cys119) is a 2-(S-cysteinyl)pyruvic acid O-phosphothioketal. UDP-N-acetyl-alpha-D-glucosamine contacts are provided by residues 124-128 (RPVDQ), Asp308, and Val330.

The protein belongs to the EPSP synthase family. MurA subfamily.

It localises to the cytoplasm. It carries out the reaction phosphoenolpyruvate + UDP-N-acetyl-alpha-D-glucosamine = UDP-N-acetyl-3-O-(1-carboxyvinyl)-alpha-D-glucosamine + phosphate. Its pathway is cell wall biogenesis; peptidoglycan biosynthesis. In terms of biological role, cell wall formation. Adds enolpyruvyl to UDP-N-acetylglucosamine. The sequence is that of UDP-N-acetylglucosamine 1-carboxyvinyltransferase from Deinococcus radiodurans (strain ATCC 13939 / DSM 20539 / JCM 16871 / CCUG 27074 / LMG 4051 / NBRC 15346 / NCIMB 9279 / VKM B-1422 / R1).